A 1306-amino-acid chain; its full sequence is Signaling mucin MSB2 (1306 aa).

The first 21 residues, 1–21 (MQFPFACLLSTLVISGSLARA), serve as a signal peptide directing secretion. At 22 to 1185 (SPFDFIFGNG…VSTSSKSKKK (1164 aa)) the chain is on the extracellular side. Asn-30 is a glycosylation site (N-linked (GlcNAc...) asparagine). 5 disordered regions span residues 248–267 (SADF…LSAA), 519–539 (QAGG…SSST), 561–580 (YMAG…LSES), 665–685 (SSIS…SASS), and 709–849 (TSSS…SVSQ). The segment covering 519 to 528 (QAGGSSMTNP) has biased composition (polar residues). Residues 529-539 (SSSTIVYSSST) are compositionally biased toward low complexity. 2 stretches are compositionally biased toward low complexity: residues 665 to 674 (SSISSEFSPS) and 709 to 831 (TSSS…TSSQ). 7 consecutive repeat copies span residues 698-714 (SQVS…SSSV), 715-731 (SQVS…SSSV), 732-748 (SQVS…SSSV), 749-765 (SQVS…SSSV), 766-782 (SQVS…SSSV), 783-799 (SQVS…RSSV), and 800-816 (SQVS…RSSV). The interval 698–816 (SQVSDTSVSY…VPSTSSRSSV (119 aa)) is 7 X 17 AA tandem repeats. 5 N-linked (GlcNAc...) asparagine glycosylation sites follow: Asn-859, Asn-885, Asn-945, Asn-1049, and Asn-1088. The tract at residues 1123-1158 (SNSGGSSDGSSSSNSNSGSSGSGSNSNSGVSSSSGN) is disordered. Asn-1175 is a glycosylation site (N-linked (GlcNAc...) asparagine). The chain crosses the membrane as a helical span at residues 1186 to 1206 (IIGLVIGVVVGGCLYILFMIF). Residues 1207–1306 (AFKYIIRRRI…SQNSLGWNEV (100 aa)) lie on the Cytoplasmic side of the membrane. Residues 1272–1291 (LTNNDSTPTRHNTSSSIPKI) are disordered. Phosphoserine is present on Ser-1300.

Belongs to the HKR1/MSB2 family. In terms of assembly, interacts with CDC42 and SHO1. In terms of processing, O-glycosylated in the Ser/Thr-rich regions.

It localises to the cell membrane. In terms of biological role, plasma membrane signaling mucin that promotes activation of the MAPK for the filamentous growth pathway. Partially redundant with the SHO1 osmosensing branch for the activation of STE11. In Saccharomyces cerevisiae (strain ATCC 204508 / S288c) (Baker's yeast), this protein is Signaling mucin MSB2 (MSB2).